We begin with the raw amino-acid sequence, 257 residues long: DNA repair protein RecO (257 aa).

The protein belongs to the RecO family.

Functionally, involved in DNA repair and RecF pathway recombination. In Synechococcus sp. (strain CC9605), this protein is DNA repair protein RecO.